The following is a 439-amino-acid chain: Homogentisate 1,2-dioxygenase (439 aa).

His293 serves as the catalytic Proton acceptor. Residues His336 and Glu342 each contribute to the Fe cation site. Tyr351 and His372 together coordinate homogentisate. Position 372 (His372) interacts with Fe cation.

The protein belongs to the homogentisate dioxygenase family. In terms of assembly, hexamer; dimer of trimers. Requires Fe cation as cofactor.

It carries out the reaction homogentisate + O2 = 4-maleylacetoacetate + H(+). It participates in amino-acid degradation; L-phenylalanine degradation; acetoacetate and fumarate from L-phenylalanine: step 4/6. Functionally, involved in the catabolism of homogentisate (2,5-dihydroxyphenylacetate or 2,5-OH-PhAc), a central intermediate in the degradation of phenylalanine and tyrosine. Catalyzes the oxidative ring cleavage of the aromatic ring of homogentisate to yield maleylacetoacetate. The sequence is that of Homogentisate 1,2-dioxygenase from Cupriavidus necator (strain ATCC 17699 / DSM 428 / KCTC 22496 / NCIMB 10442 / H16 / Stanier 337) (Ralstonia eutropha).